Reading from the N-terminus, the 374-residue chain is Phospho-2-dehydro-3-deoxyheptonate aldolase AMT16 (374 aa).

This sequence belongs to the class-I DAHP synthase family.

The enzyme catalyses D-erythrose 4-phosphate + phosphoenolpyruvate + H2O = 7-phospho-2-dehydro-3-deoxy-D-arabino-heptonate + phosphate. The protein operates within mycotoxin biosynthesis. Nonribosomal peptide synthetase; part of the gene clusters that mediate the biosynthesis of AM-toxins, host-selective toxins (HSTs) causing Alternaria blotch on apple, a worldwide distributed disease. AM-toxins are cyclic depsipeptides containing the 3 residues 2-hydroxy-isovaleric acid (2-HIV), dehydroalanine, L-alanine which are common for all 3 AM-toxins I to III. The fourth precursor is L-alpha-amino-methoxyphenyl-valeric acid (L-Amv) for AM-toxin I, L-alpha-amino-phenyl-valeric acid (L-Apv) for AM-toxin II, and L-alpha-amino-hydroxyphenyl-valeric acid (L-Ahv) for AM-toxin III. AM-toxins have two target sites for affecting susceptible apple cells; they cause invagination of the plasma membrane and electrolyte loss and chloroplast disorganization. The non-ribosomal peptide synthetase AMT1 contains 4 catalytic modules and is responsible for activation of each residue in AM-toxin. The aldo-keto reductase AMT2 catalyzes the conversion of 2-keto-isovaleric acid (2-KIV) to 2-hydroxy-isovaleric acid (2-HIV), one of the precursor residues incorporated by AMT1 during AM-toxin biosynthesis, by reduction of its ketone to an alcohol. The cytochrome P450 monooxygenase AMT3 and the thioesterase AMT4 are also important for AM-toxin production, but their exact function within the AM-toxin biosynthesis are not known yet. Up to 21 proteins (including AMT1 to AMT4) are predicted to be involved in AM-toxin biosynthesis since their expression ishighly up-regulated in AM-toxin-producing cultures. The polypeptide is Phospho-2-dehydro-3-deoxyheptonate aldolase AMT16 (Alternaria alternata (Alternaria rot fungus)).